A 269-amino-acid polypeptide reads, in one-letter code: Interleukin-1 beta (269 aa).

Residues 1–117 constitute a propeptide that is removed on maturation; it reads MATVPELNCE…DDDDNLLVCD (117 aa).

It belongs to the IL-1 family. Monomer. Interacts with MEFV. Interacts with integrins ITGAV:ITGBV and ITGA5:ITGB1; integrin-binding is required for IL1B signaling. Interacts with cargo receptor TMED10; the interaction is direct and is required for the secretion of IL1B mature form. Interacts with HSP90AB1; the interaction facilitates cargo translocation into the ERGIC. Interacts with HSP90B1; the interaction facilitates cargo translocation into the ERGIC. Expressed in activated macrophages (at protein level).

It localises to the cytoplasm. It is found in the cytosol. The protein resides in the secreted. Its subcellular location is the lysosome. The protein localises to the extracellular exosome. In terms of biological role, potent pro-inflammatory cytokine. Initially discovered as the major endogenous pyrogen, induces prostaglandin synthesis, neutrophil influx and activation, T-cell activation and cytokine production, B-cell activation and antibody production, and fibroblast proliferation and collagen production. Promotes Th17 differentiation of T-cells. Synergizes with IL12/interleukin-12 to induce IFNG synthesis from T-helper 1 (Th1) cells. Plays a role in angiogenesis by inducing VEGF production synergistically with TNF and IL6. Involved in transduction of inflammation downstream of pyroptosis: its mature form is specifically released in the extracellular milieu by passing through the gasdermin-D (GSDMD) pore. The sequence is that of Interleukin-1 beta (Il1b) from Mus musculus (Mouse).